A 311-amino-acid chain; its full sequence is MKVAVLGAAGGIGQALALLLKTQLPAGSHLSLYDIAPVTPGVAVDLSHIPTAVEIKGFAGEDPTPALVGADVVLISAGVARKPGMDRSDLFNINAGIVRNLIEKVAATCPTALVGIITNPVNTTVAIAAEVMKKAGVYDKNRLFGITTLDVIRSETFIAELKGLNVADVKVNVIGGHSGVTILPLLSQVEGATFTDEEVASLTTRIQNAGTEVVEAKAGGGSATLSMGQAACRFGLSLVRGLQGEANIVECAYVDGGSEHAEFFAQPVLLGKNGIEKVLPYGEVSAFEANARDSMLDTLKGDIKLGVDFVK.

NAD(+) contacts are provided by residues 7-13 (GAAGGIG) and Asp-34. Substrate contacts are provided by Arg-81 and Arg-87. Residues Asn-94 and 117–119 (ITN) each bind NAD(+). Substrate is bound by residues Asn-119 and Arg-153. His-177 serves as the catalytic Proton acceptor. Met-227 serves as a coordination point for NAD(+).

It belongs to the LDH/MDH superfamily. MDH type 1 family. In terms of assembly, homodimer.

The enzyme catalyses (S)-malate + NAD(+) = oxaloacetate + NADH + H(+). Functionally, catalyzes the reversible oxidation of malate to oxaloacetate. This Shewanella baltica (strain OS223) protein is Malate dehydrogenase.